The primary structure comprises 92 residues: Small ribosomal subunit protein uS19 (92 aa).

Belongs to the universal ribosomal protein uS19 family.

Its function is as follows. Protein S19 forms a complex with S13 that binds strongly to the 16S ribosomal RNA. This chain is Small ribosomal subunit protein uS19, found in Rickettsia akari (strain Hartford).